A 259-amino-acid polypeptide reads, in one-letter code: Global transcriptional regulator CodY (259 aa).

Residues 1–155 (MELLAKTRKL…SSTVVGMEIL (155 aa)) are GAF domain. A DNA-binding region (H-T-H motif) is located at residues 203–222 (ASKIADRVGITRSVIVNALR). At S215 the chain carries Phosphoserine.

This sequence belongs to the CodY family.

It localises to the cytoplasm. DNA-binding global transcriptional regulator which is involved in the adaptive response to starvation and acts by directly or indirectly controlling the expression of numerous genes in response to nutrient availability. During rapid exponential growth, CodY is highly active and represses genes whose products allow adaptation to nutrient depletion. This chain is Global transcriptional regulator CodY, found in Bacillus cereus (strain ATCC 10987 / NRS 248).